A 434-amino-acid polypeptide reads, in one-letter code: Trigger factor (434 aa).

One can recognise a PPIase FKBP-type domain in the interval 161–246; sequence EDRVTVDFTG…LKKVEQRELP (86 aa).

This sequence belongs to the FKBP-type PPIase family. Tig subfamily.

Its subcellular location is the cytoplasm. It catalyses the reaction [protein]-peptidylproline (omega=180) = [protein]-peptidylproline (omega=0). In terms of biological role, involved in protein export. Acts as a chaperone by maintaining the newly synthesized protein in an open conformation. Functions as a peptidyl-prolyl cis-trans isomerase. This chain is Trigger factor, found in Sodalis glossinidius (strain morsitans).